We begin with the raw amino-acid sequence, 155 residues long: Small ribosomal subunit protein uS7cz/uS7cy (155 aa).

It belongs to the universal ribosomal protein uS7 family. As to quaternary structure, part of the 30S ribosomal subunit.

It localises to the plastid. The protein localises to the chloroplast. Functionally, one of the primary rRNA binding proteins, it binds directly to 16S rRNA where it nucleates assembly of the head domain of the 30S subunit. The protein is Small ribosomal subunit protein uS7cz/uS7cy (rps7-A) of Ipomoea purpurea (Common morning glory).